The sequence spans 812 residues: Valine--tRNA ligase (812 aa).

The 'HIGH' region signature appears at 46–56 (PTVSGQLHIGH). The short motif at 536 to 540 (KMSKS) is the 'KMSKS' region element. Lys-539 serves as a coordination point for ATP.

The protein belongs to the class-I aminoacyl-tRNA synthetase family. ValS type 2 subfamily. Monomer.

The protein resides in the cytoplasm. It carries out the reaction tRNA(Val) + L-valine + ATP = L-valyl-tRNA(Val) + AMP + diphosphate. Its function is as follows. Catalyzes the attachment of valine to tRNA(Val). As ValRS can inadvertently accommodate and process structurally similar amino acids such as threonine, to avoid such errors, it has a 'posttransfer' editing activity that hydrolyzes mischarged Thr-tRNA(Val) in a tRNA-dependent manner. The polypeptide is Valine--tRNA ligase (Rickettsia bellii (strain RML369-C)).